We begin with the raw amino-acid sequence, 268 residues long: 4-hydroxy-tetrahydrodipicolinate reductase (268 aa).

NAD(+) contacts are provided by residues 9-14, Glu35, 99-101, and 123-126; these read GVCGRM, GTT, and APNY. The Proton donor/acceptor role is filled by His156. His157 provides a ligand contact to (S)-2,3,4,5-tetrahydrodipicolinate. The active-site Proton donor is the Lys160. 166 to 167 provides a ligand contact to (S)-2,3,4,5-tetrahydrodipicolinate; the sequence is GT.

It belongs to the DapB family.

It is found in the cytoplasm. It carries out the reaction (S)-2,3,4,5-tetrahydrodipicolinate + NAD(+) + H2O = (2S,4S)-4-hydroxy-2,3,4,5-tetrahydrodipicolinate + NADH + H(+). The catalysed reaction is (S)-2,3,4,5-tetrahydrodipicolinate + NADP(+) + H2O = (2S,4S)-4-hydroxy-2,3,4,5-tetrahydrodipicolinate + NADPH + H(+). It functions in the pathway amino-acid biosynthesis; L-lysine biosynthesis via DAP pathway; (S)-tetrahydrodipicolinate from L-aspartate: step 4/4. Its function is as follows. Catalyzes the conversion of 4-hydroxy-tetrahydrodipicolinate (HTPA) to tetrahydrodipicolinate. The chain is 4-hydroxy-tetrahydrodipicolinate reductase from Magnetococcus marinus (strain ATCC BAA-1437 / JCM 17883 / MC-1).